The sequence spans 152 residues: uncharacterized protein (152 aa).

In terms of domain architecture, VOC spans 7 to 133 (PALSPHLVVD…FGHHWSLGQP (127 aa)).

This is an uncharacterized protein from Mycobacterium bovis (strain ATCC BAA-935 / AF2122/97).